The following is a 288-amino-acid chain: Protease HtpX (288 aa).

2 consecutive transmembrane segments (helical) span residues 5-25 (IALF…VMSL) and 35-55 (GLLV…LLLS). H140 is a binding site for Zn(2+). E141 is an active-site residue. H144 provides a ligand contact to Zn(2+). Helical transmembrane passes span 155-175 (LLQG…GGII) and 194-214 (IIVF…SMWF). E219 serves as a coordination point for Zn(2+).

Belongs to the peptidase M48B family. Zn(2+) is required as a cofactor.

It is found in the cell inner membrane. This is Protease HtpX from Stenotrophomonas maltophilia (strain K279a).